The following is a 328-amino-acid chain: Putative P2Y purinoceptor 10 (328 aa).

At Met1–Thr27 the chain is on the extracellular side. Asn4 and Asn14 each carry an N-linked (GlcNAc...) asparagine glycan. A helical transmembrane segment spans residues Thr28–Cys48. At Arg49–Lys56 the chain is on the cytoplasmic side. A helical transmembrane segment spans residues Ala57 to Leu77. At Arg78–Arg91 the chain is on the extracellular side. Residues Ala92–Leu112 form a helical membrane-spanning segment. Cys94 and Cys170 form a disulfide bridge. At Thr113–Asp137 the chain is on the cytoplasmic side. A helical membrane pass occupies residues Val138 to Leu158. Residues Arg159–Val182 are Extracellular-facing. The helical transmembrane segment at Val183 to Ile203 threads the bilayer. Residues Ala204–Met233 are Cytoplasmic-facing. A helical membrane pass occupies residues Val234–Phe254. At Tyr255–Pro277 the chain is on the extracellular side. The chain crosses the membrane as a helical span at residues Phe278–Ala298. Residues Ser299–Asn328 are Cytoplasmic-facing.

Belongs to the G-protein coupled receptor 1 family.

The protein localises to the cell membrane. Its function is as follows. Putative receptor for purines coupled to G-proteins. The chain is Putative P2Y purinoceptor 10 (P2ry10) from Mus musculus (Mouse).